Consider the following 318-residue polypeptide: Putative olfactory receptor 2W6 (318 aa).

At Met-1–Leu-31 the chain is on the extracellular side. The helical transmembrane segment at Ile-32 to Val-52 threads the bilayer. Topologically, residues Leu-53–Thr-63 are cytoplasmic. The helical transmembrane segment at Pro-64 to Ile-84 threads the bilayer. Over Pro-85–Cys-103 the chain is Extracellular. Cys-103 and Cys-185 form a disulfide bridge. A helical membrane pass occupies residues Ala-104 to Met-124. The Cytoplasmic segment spans residues Ala-125–Arg-145. A helical membrane pass occupies residues Leu-146–Ala-166. Topologically, residues Pro-167–Glu-202 are extracellular. Residues Ala-203–Ser-223 traverse the membrane as a helical segment. Residues Tyr-224–Asn-245 lie on the Cytoplasmic side of the membrane. Residues Thr-246 to Leu-266 form a helical membrane-spanning segment. Residues Gln-267–Gly-277 lie on the Extracellular side of the membrane. A helical membrane pass occupies residues Lys-278–Leu-298. The Cytoplasmic segment spans residues Arg-299–Ile-318.

The protein belongs to the G-protein coupled receptor 1 family.

The protein resides in the cell membrane. Functionally, odorant receptor. The chain is Putative olfactory receptor 2W6 (OR2W6P) from Homo sapiens (Human).